A 556-amino-acid polypeptide reads, in one-letter code: Cytochrome P450 4g1 (556 aa).

Heme is bound by residues glutamate 356 and cysteine 497.

Belongs to the cytochrome P450 family. Heme serves as cofactor.

Its subcellular location is the endoplasmic reticulum membrane. It localises to the microsome membrane. Functionally, may be involved in the metabolism of insect hormones and in the breakdown of synthetic insecticides. This chain is Cytochrome P450 4g1 (Cyp4g1), found in Drosophila melanogaster (Fruit fly).